A 335-amino-acid polypeptide reads, in one-letter code: uncharacterized protein (335 aa).

A disordered region spans residues 201–236 (GPMAKNKARRKEDNYDTHNCDDANQDKKEEAEGKNT). The span at 210–235 (RKEDNYDTHNCDDANQDKKEEAEGKN) shows a compositional bias: basic and acidic residues.

Its function is as follows. Dispensable for normal development and fertility. This is an uncharacterized protein from Homo sapiens (Human).